The sequence spans 186 residues: Elongation factor P (186 aa).

The protein belongs to the elongation factor P family.

The protein resides in the cytoplasm. It participates in protein biosynthesis; polypeptide chain elongation. In terms of biological role, involved in peptide bond synthesis. Stimulates efficient translation and peptide-bond synthesis on native or reconstituted 70S ribosomes in vitro. Probably functions indirectly by altering the affinity of the ribosome for aminoacyl-tRNA, thus increasing their reactivity as acceptors for peptidyl transferase. This is Elongation factor P from Streptococcus thermophilus (strain CNRZ 1066).